Consider the following 233-residue polypeptide: Eosinophil granule major basic protein 1 (233 aa).

The signal sequence occupies residues 1-15 (MKLLLLLALLLGAVS). The propeptide at 16–114 (TRHLKVDTSS…VKFFSRPGYK (99 aa)) is acidic. Residues 24–96 (SSLQSLRGEE…SELDVSPEDI (73 aa)) form a disordered region. Low complexity predominate over residues 42–57 (AEGATREATAGALMPL). Acidic residues predominate over residues 58–93 (PEEEEMEGASGSEDDPEEEEEEEEEVEFSSELDVSP). The region spanning 132 to 233 (WVCQRCYRGN…GKRRPFVCTY (102 aa)) is the C-type lectin domain. Disulfide bonds link Cys134-Cys231 and Cys208-Cys223.

Post-translationally, nitrated.

The protein localises to the cytoplasmic granule. In terms of biological role, MBP may play some important roles in the allergic reactions and inflammations, since MBP is capable of releasing histamine from mast cells and damaging the epithelial cells of bronchial tubes. Antiparasitic and antibiotic. The polypeptide is Eosinophil granule major basic protein 1 (MBP1) (Cavia porcellus (Guinea pig)).